The chain runs to 130 residues: Small ribosomal subunit protein uS11 (130 aa).

Belongs to the universal ribosomal protein uS11 family. In terms of assembly, part of the 30S ribosomal subunit. Interacts with proteins S7 and S18. Binds to IF-3.

Its function is as follows. Located on the platform of the 30S subunit, it bridges several disparate RNA helices of the 16S rRNA. Forms part of the Shine-Dalgarno cleft in the 70S ribosome. This is Small ribosomal subunit protein uS11 from Microcystis aeruginosa (strain NIES-843 / IAM M-2473).